We begin with the raw amino-acid sequence, 224 residues long: Urease accessory protein UreF (224 aa).

This sequence belongs to the UreF family. In terms of assembly, ureD, UreF and UreG form a complex that acts as a GTP-hydrolysis-dependent molecular chaperone, activating the urease apoprotein by helping to assemble the nickel containing metallocenter of UreC. The UreE protein probably delivers the nickel.

Its subcellular location is the cytoplasm. Its function is as follows. Required for maturation of urease via the functional incorporation of the urease nickel metallocenter. In Pseudomonas fluorescens (strain Pf0-1), this protein is Urease accessory protein UreF.